A 466-amino-acid chain; its full sequence is METAERISAAASAASSRRAKRLAQQAHKTHPVIQAKQNQMYLITTLSPAQVDNSLINRVLPKEVLLKVFSFLDTKALCRSAQVCRSWSILALDGSNWQRVDLFTFQRDVKTAVVENLARRCGGFLKELSLKGCENVHDSALRTFTSRCPNLEHLSLYRCKRVTDASCENLGRYCHKLNYLNLENCSSITDRAMKYIGDGCPNLSYLNISWCDAIQDRGVQIILSNCKSLDTLILRGCEGLTENVFGSVEAHMGAIKKLNLLQCFQLTDITVQNIANGATALEYLCMSNCNQISDRSLVSLGQHSHNLKVLELSGCTLLGDNGFIPLARGCRQLERLDMEDCSLISDHTINSLANNCTALRELSLSHCELITDESIQNLASKHRETLNVLELDNCPQLTDSTLSHLRHCKALKRIDLYDCQNVSKEAIVRFQHHRPNIEIHAYFAPVTPPTDQVVNRGGICRCCVIL.

The region spanning 54–100 is the F-box domain; it reads SLINRVLPKEVLLKVFSFLDTKALCRSAQVCRSWSILALDGSNWQRV. LRR repeat units lie at residues 122–147, 148–173, 174–199, 200–225, 226–251, 252–277, 278–303, 304–329, 330–355, 356–381, and 408–433; these read GGFL…FTSR, CPNL…LGRY, CHKL…IGDG, CPNL…ILSN, CKSL…VEAH, MGAI…IANG, ATAL…LGQH, SHNL…LARG, CRQL…LANN, CTAL…LASK, and CKAL…FQHH.

Component of the SCF (SKP1-CUL1-F-box protein)-type E3 ubiquitin ligase complex. Expressed in neuroglial cells such as the socket cell and sheath cell, neurosecretory motor neurons and regions around the pharynx and anus.

Its subcellular location is the perikaryon. It localises to the cell projection. It is found in the dendrite. The protein resides in the cilium. The protein localises to the axon. In terms of biological role, substrate-recognition component of the SCF (SKP1-CUL1-F-box protein)-type E3 ubiquitin ligase complex. Plays a role in regulating the entry into the dauer state. In hermaphrodites, may play a role in modulating the rate of defecation. In Caenorhabditis elegans, this protein is F-box/LRR-repeat protein fbxl-1.